A 317-amino-acid chain; its full sequence is Transaldolase (317 aa).

K132 functions as the Schiff-base intermediate with substrate in the catalytic mechanism.

The protein belongs to the transaldolase family. Type 1 subfamily. As to quaternary structure, homodimer.

It localises to the cytoplasm. The enzyme catalyses D-sedoheptulose 7-phosphate + D-glyceraldehyde 3-phosphate = D-erythrose 4-phosphate + beta-D-fructose 6-phosphate. It participates in carbohydrate degradation; pentose phosphate pathway; D-glyceraldehyde 3-phosphate and beta-D-fructose 6-phosphate from D-ribose 5-phosphate and D-xylulose 5-phosphate (non-oxidative stage): step 2/3. Transaldolase is important for the balance of metabolites in the pentose-phosphate pathway. The protein is Transaldolase of Photorhabdus laumondii subsp. laumondii (strain DSM 15139 / CIP 105565 / TT01) (Photorhabdus luminescens subsp. laumondii).